A 140-amino-acid chain; its full sequence is UPF0102 protein ACIAD1132 (140 aa).

It belongs to the UPF0102 family.

This chain is UPF0102 protein ACIAD1132, found in Acinetobacter baylyi (strain ATCC 33305 / BD413 / ADP1).